The sequence spans 320 residues: o-succinylbenzoate synthase (320 aa).

The active-site Proton donor is K133. Mg(2+)-binding residues include D161, E190, and D213. K235 (proton acceptor) is an active-site residue.

This sequence belongs to the mandelate racemase/muconate lactonizing enzyme family. MenC type 1 subfamily. Requires a divalent metal cation as cofactor.

The catalysed reaction is (1R,6R)-6-hydroxy-2-succinyl-cyclohexa-2,4-diene-1-carboxylate = 2-succinylbenzoate + H2O. Its pathway is quinol/quinone metabolism; 1,4-dihydroxy-2-naphthoate biosynthesis; 1,4-dihydroxy-2-naphthoate from chorismate: step 4/7. The protein operates within quinol/quinone metabolism; menaquinone biosynthesis. Converts 2-succinyl-6-hydroxy-2,4-cyclohexadiene-1-carboxylate (SHCHC) to 2-succinylbenzoate (OSB). In Salmonella dublin (strain CT_02021853), this protein is o-succinylbenzoate synthase.